A 177-amino-acid chain; its full sequence is Large ribosomal subunit protein uL6 (177 aa).

It belongs to the universal ribosomal protein uL6 family. In terms of assembly, part of the 50S ribosomal subunit.

Its function is as follows. This protein binds to the 23S rRNA, and is important in its secondary structure. It is located near the subunit interface in the base of the L7/L12 stalk, and near the tRNA binding site of the peptidyltransferase center. This is Large ribosomal subunit protein uL6 from Salmonella arizonae (strain ATCC BAA-731 / CDC346-86 / RSK2980).